The primary structure comprises 336 residues: Large ribosomal subunit protein uL3 (336 aa).

The segment at 1–34 is disordered; sequence MVRHHQPRKGSVAFSPRKRAAKETPRIKSWPQND.

This sequence belongs to the universal ribosomal protein uL3 family. As to quaternary structure, part of the 50S ribosomal subunit. Forms a cluster with proteins L14 and L24e.

In terms of biological role, one of the primary rRNA binding proteins, it binds directly near the 3'-end of the 23S rRNA, where it nucleates assembly of the 50S subunit. The sequence is that of Large ribosomal subunit protein uL3 from Methanobrevibacter smithii (strain ATCC 35061 / DSM 861 / OCM 144 / PS).